A 334-amino-acid polypeptide reads, in one-letter code: UstYa family oxidase aprY (334 aa).

Residues 55–75 form a helical membrane-spanning segment; sequence IWILLTITNLIILGITVSMIV. A glycan (N-linked (GlcNAc...) asparagine) is linked at asparagine 112. Residues 185-189 carry the HXXHC 1 motif; that stretch reads HQIHC. The N-linked (GlcNAc...) asparagine glycan is linked to asparagine 214. Positions 223–227 match the HXXHC 2 motif; that stretch reads HLGHC. Over residues 306–318 the composition is skewed to basic and acidic residues; sequence SELGEKLGKHQKQ. The tract at residues 306–334 is disordered; it reads SELGEKLGKHQKQEGVLGQAGHQHTKRHE.

The protein belongs to the ustYa family.

It is found in the membrane. The protein operates within secondary metabolite biosynthesis. UstYa family oxidase; part of the gene cluster that mediates the biosynthesis of the asperipin-2a, a bicyclic peptide that possesses two macrocyclic ether rings consisting of 14- and 17-membered paracyclophans. Within the pathway, aprY is responsible for the synthesis of the bicyclic structure of asperipin-2a. The pathway starts with the processing of the precursor aprA by kexin proteases to produce 11 identical copies of the hexapeptide Phe-Tyr-Tyr-Thr-Gly-Tyr. Macrocyclization of asperipin-2a may accompany an alpha-hydroxylation-dehydration sequence to give an imine, which is readily hydrolyzed to yield putative ketone intermediate. The reductase aprR may be required for the final reduction to yield asperipin-2a. The sequence is that of UstYa family oxidase aprY from Aspergillus flavus (strain ATCC 200026 / FGSC A1120 / IAM 13836 / NRRL 3357 / JCM 12722 / SRRC 167).